We begin with the raw amino-acid sequence, 156 residues long: UPF0460 protein in nifX 3'region (156 aa).

Belongs to the UPF0460 family.

The chain is UPF0460 protein in nifX 3'region from Rhodobacter capsulatus (Rhodopseudomonas capsulata).